Consider the following 318-residue polypeptide: Aspartate carbamoyltransferase catalytic subunit (318 aa).

Carbamoyl phosphate-binding residues include arginine 67 and threonine 68. Lysine 95 provides a ligand contact to L-aspartate. Carbamoyl phosphate contacts are provided by arginine 117, histidine 145, and glutamine 148. Arginine 178 and arginine 236 together coordinate L-aspartate. Carbamoyl phosphate-binding residues include glycine 277 and proline 278.

The protein belongs to the aspartate/ornithine carbamoyltransferase superfamily. ATCase family. In terms of assembly, heterododecamer (2C3:3R2) of six catalytic PyrB chains organized as two trimers (C3), and six regulatory PyrI chains organized as three dimers (R2).

The catalysed reaction is carbamoyl phosphate + L-aspartate = N-carbamoyl-L-aspartate + phosphate + H(+). Its pathway is pyrimidine metabolism; UMP biosynthesis via de novo pathway; (S)-dihydroorotate from bicarbonate: step 2/3. Its function is as follows. Catalyzes the condensation of carbamoyl phosphate and aspartate to form carbamoyl aspartate and inorganic phosphate, the committed step in the de novo pyrimidine nucleotide biosynthesis pathway. This is Aspartate carbamoyltransferase catalytic subunit from Roseiflexus sp. (strain RS-1).